We begin with the raw amino-acid sequence, 240 residues long: Probable septum site-determining protein MinC (240 aa).

The protein belongs to the MinC family. As to quaternary structure, interacts with MinD and FtsZ.

In terms of biological role, cell division inhibitor that blocks the formation of polar Z ring septums. Rapidly oscillates between the poles of the cell to destabilize FtsZ filaments that have formed before they mature into polar Z rings. Prevents FtsZ polymerization. The sequence is that of Probable septum site-determining protein MinC from Acinetobacter baylyi (strain ATCC 33305 / BD413 / ADP1).